The primary structure comprises 148 residues: Antitoxin Xre (148 aa).

The protein belongs to the MbcA/ParS/Xre antitoxin family. As to quaternary structure, homodimer. Forms a complex with cognate toxin Rse.

In terms of biological role, antitoxin component of a type II toxin-antitoxin (TA) system. Neutralizes the NAD(+) depleting activity of cognate toxin Res. The polypeptide is Antitoxin Xre (Photorhabdus laumondii subsp. laumondii (strain DSM 15139 / CIP 105565 / TT01) (Photorhabdus luminescens subsp. laumondii)).